Consider the following 195-residue polypeptide: MDIRELVHLGRYAVWNAFEGKEIKVPEALKEKYSRNMGVFTTLKTYPEHNLRGCIGVPLPVYPLWYATVYSSLQAAFQDPRFYPLKKEEFDKVLWEITLLTPPEELKVPKEELPEQIEIGKHGLIIEKGEQKGLLLPQVPVEYGWSPVEFLEYTCLKAGLPKDCWKDKETKVYVFSGEVYQEKEPFGEVERVNLK.

Residues 1 to 191 (MDIRELVHLG…EKEPFGEVER (191 aa)) form the AMMECR1 domain.

The polypeptide is Protein aq_1444 (Aquifex aeolicus (strain VF5)).